A 312-amino-acid polypeptide reads, in one-letter code: Porphobilinogen deaminase (312 aa).

Cys243 bears the S-(dipyrrolylmethanemethyl)cysteine mark.

Belongs to the HMBS family. In terms of assembly, monomer. It depends on dipyrromethane as a cofactor.

The enzyme catalyses 4 porphobilinogen + H2O = hydroxymethylbilane + 4 NH4(+). Its pathway is porphyrin-containing compound metabolism; protoporphyrin-IX biosynthesis; coproporphyrinogen-III from 5-aminolevulinate: step 2/4. Tetrapolymerization of the monopyrrole PBG into the hydroxymethylbilane pre-uroporphyrinogen in several discrete steps. This is Porphobilinogen deaminase from Vibrio vulnificus (strain CMCP6).